The primary structure comprises 267 residues: Putative N-acetylmuramoyl-L-alanine amidase RC0497 (267 aa).

Residues 1-25 (MSKSKAIENNGISNTNSPNGKYMAP) are disordered. Residues 10 to 19 (NGISNTNSPN) are compositionally biased toward polar residues. An N-acetylmuramoyl-L-alanine amidase domain is found at 33 to 141 (TCVVITYSVS…NLDLKHDLVG (109 aa)).

It belongs to the N-acetylmuramoyl-L-alanine amidase 2 family.

The protein resides in the secreted. The catalysed reaction is Hydrolyzes the link between N-acetylmuramoyl residues and L-amino acid residues in certain cell-wall glycopeptides.. The sequence is that of Putative N-acetylmuramoyl-L-alanine amidase RC0497 from Rickettsia conorii (strain ATCC VR-613 / Malish 7).